The primary structure comprises 472 residues: UDP-glucosyltransferase 103 (472 aa).

The active-site Proton acceptor is H15. H15 provides a ligand contact to an anthocyanidin. Residue D117 is the Charge relay of the active site. Positions 344, 346, 361, 364, 365, 366, and 369 each coordinate UDP-alpha-D-glucose. G384 is an an anthocyanidin binding site. E385 and Q386 together coordinate UDP-alpha-D-glucose.

The protein belongs to the UDP-glycosyltransferase family.

It carries out the reaction (20S)-ginsenoside F1 + UDP-alpha-D-glucose = (20S)-ginsenoside Rg1 + UDP + H(+). It participates in secondary metabolite biosynthesis; terpenoid biosynthesis. Probable component of the triterpene saponins (e.g. ginsenosides) biosynthetic pathway. No detectable activity toward protopanaxatriol (PPT). The polypeptide is UDP-glucosyltransferase 103 (Panax ginseng (Korean ginseng)).